Reading from the N-terminus, the 304-residue chain is Dihydroorotate dehydrogenase B (NAD(+)), catalytic subunit (304 aa).

FMN-binding positions include Ser21 and 45 to 46; that span reads KA. Residues Lys45 and 69–73 each bind substrate; that span reads NAIGL. 2 residues coordinate FMN: Asn99 and Asn127. Asn127 is a substrate binding site. Cys130 acts as the Nucleophile in catalysis. Residues Lys165 and Ile191 each contribute to the FMN site. 192 to 193 serves as a coordination point for substrate; sequence NT. FMN-binding positions include Gly217, 243–244, and 265–266; these read GG and GT.

It belongs to the dihydroorotate dehydrogenase family. Type 1 subfamily. Heterotetramer of 2 PyrK and 2 PyrD type B subunits. The cofactor is FMN.

The protein resides in the cytoplasm. It catalyses the reaction (S)-dihydroorotate + NAD(+) = orotate + NADH + H(+). It functions in the pathway pyrimidine metabolism; UMP biosynthesis via de novo pathway; orotate from (S)-dihydroorotate (NAD(+) route): step 1/1. Functionally, catalyzes the conversion of dihydroorotate to orotate with NAD(+) as electron acceptor. The sequence is that of Dihydroorotate dehydrogenase B (NAD(+)), catalytic subunit (pyrD) from Listeria monocytogenes serotype 4b (strain CLIP80459).